Consider the following 272-residue polypeptide: Phosphate import ATP-binding protein PstB (272 aa).

The ABC transporter domain maps to 26–267; the sequence is LDIKNLDLYY…PSEKQTEDYI (242 aa). 58–65 serves as a coordination point for ATP; that stretch reads GPSGCGKS.

This sequence belongs to the ABC transporter superfamily. Phosphate importer (TC 3.A.1.7) family. As to quaternary structure, the complex is composed of two ATP-binding proteins (PstB), two transmembrane proteins (PstC and PstA) and a solute-binding protein (PstS).

It is found in the cell inner membrane. It carries out the reaction phosphate(out) + ATP + H2O = ADP + 2 phosphate(in) + H(+). Functionally, part of the ABC transporter complex PstSACB involved in phosphate import. Responsible for energy coupling to the transport system. The chain is Phosphate import ATP-binding protein PstB from Idiomarina loihiensis (strain ATCC BAA-735 / DSM 15497 / L2-TR).